The chain runs to 59 residues: U-myrmeciitoxin(01)-Mg5b (59 aa).

An N-terminal signal peptide occupies residues 1-21 (MRLSYLSLALAIIFVLTIMHA). The propeptide occupies 22-38 (SNVEAKASADPEPDAVG).

In terms of tissue distribution, expressed by the venom gland.

It is found in the secreted. Its function is as follows. May have antimicrobial properties, like most ant linear peptides. This is U-myrmeciitoxin(01)-Mg5b from Myrmecia gulosa (Red bulldog ant).